Reading from the N-terminus, the 434-residue chain is 26S proteasome regulatory subunit 6A (434 aa).

Alanine 2 is modified (N-acetylalanine). The residue at position 180 (tyrosine 180) is a Phosphotyrosine. ATP is bound at residue 222 to 229; that stretch reads GPPGTGKT.

It belongs to the AAA ATPase family. Post-translationally, N-acetylated by NAT1.

The protein resides in the cytoplasm. It is found in the nucleus. The 26S proteasome is involved in the ATP-dependent degradation of ubiquitinated proteins. The regulatory (or ATPase) complex confers ATP dependency and substrate specificity to the 26S complex. The polypeptide is 26S proteasome regulatory subunit 6A (RPT5) (Saccharomyces cerevisiae (strain ATCC 204508 / S288c) (Baker's yeast)).